We begin with the raw amino-acid sequence, 675 residues long: Nexilin (675 aa).

A disordered region spans residues 1–66; it reads MNDISQKAEI…RKEQYIRERE (66 aa). Residue K16 is modified to Phosphoserine. Over residues 27–66 the composition is skewed to basic and acidic residues; that stretch reads GKGDVKDKFEAMQRAREERNQRRSRDEKQRRKEQYIRERE. Phosphoserine is present on S80. The disordered stretch occupies residues 105–127; that stretch reads RFAEMEKQRQEEQRKRTEEERKR. The residue at position 241 (S241) is a Phosphoserine. 2 disordered regions span residues 254–278 and 313–336; these read LERQRQENRKKQAEEEARKRLEEEK and SFEEMERQRREDEKRKAEEEARRR. 2 positions are modified to phosphoserine: S357 and S365. T370 carries the phosphothreonine modification. Disordered stretches follow at residues 487–513 and 551–584; these read ENFHEEDDVDVRPARKSEAPFTHKVNM and LQKKREEEEEEEGSIMNGSTAEDEEQTRSGAPWF. 2 positions are modified to phosphoserine: S564 and S569. The Ig-like domain occupies 582–670; sequence PWFKKPLKNT…GSAASTCILT (89 aa).

Interacts with F-actin. In terms of tissue distribution, abundantly expressed in heart and skeletal muscle, and at lower levels in placenta, lung, liver and pancreas. Also expressed in HeLaS3 and MOLT-4 cell lines.

It localises to the cytoplasm. The protein resides in the cytoskeleton. It is found in the cell junction. Its subcellular location is the adherens junction. The protein localises to the myofibril. It localises to the sarcomere. The protein resides in the z line. Its function is as follows. Involved in regulating cell migration through association with the actin cytoskeleton. Has an essential role in the maintenance of Z line and sarcomere integrity. The sequence is that of Nexilin from Homo sapiens (Human).